The chain runs to 194 residues: Flagellin A2 (194 aa).

Positions 1-12 (MFEFITDEDERG) are excised as a propeptide.

Belongs to the archaeal flagellin family. In terms of processing, glycosylated.

It localises to the archaeal flagellum. In terms of biological role, flagellin is the subunit protein which polymerizes to form the filaments of archaeal flagella. This is Flagellin A2 (flaA2) from Halobacterium salinarum (strain ATCC 700922 / JCM 11081 / NRC-1) (Halobacterium halobium).